The chain runs to 312 residues: tRNA uridine(34) hydroxylase (312 aa).

The Rhodanese domain occupies 124–218 (SDPEVLLIDT…YLEEVPQEQT (95 aa)). C178 acts as the Cysteine persulfide intermediate in catalysis. Composition is skewed to basic and acidic residues over residues 279 to 294 (TRES…ELAR) and 302 to 312 (IGRDPRQLNEA). A disordered region spans residues 279-312 (TRESARERQKQIELARARNQPHPIGRDPRQLNEA).

This sequence belongs to the TrhO family.

It catalyses the reaction uridine(34) in tRNA + AH2 + O2 = 5-hydroxyuridine(34) in tRNA + A + H2O. In terms of biological role, catalyzes oxygen-dependent 5-hydroxyuridine (ho5U) modification at position 34 in tRNAs. The protein is tRNA uridine(34) hydroxylase of Ectopseudomonas mendocina (strain ymp) (Pseudomonas mendocina).